The sequence spans 129 residues: Aspartate 1-decarboxylase (129 aa).

Serine 25 acts as the Schiff-base intermediate with substrate; via pyruvic acid in catalysis. A Pyruvic acid (Ser) modification is found at serine 25. Threonine 57 lines the substrate pocket. The active-site Proton donor is tyrosine 58. 73-75 (GAA) contacts substrate.

This sequence belongs to the PanD family. In terms of assembly, heterooctamer of four alpha and four beta subunits. Requires pyruvate as cofactor. In terms of processing, is synthesized initially as an inactive proenzyme, which is activated by self-cleavage at a specific serine bond to produce a beta-subunit with a hydroxyl group at its C-terminus and an alpha-subunit with a pyruvoyl group at its N-terminus.

The protein resides in the cytoplasm. It catalyses the reaction L-aspartate + H(+) = beta-alanine + CO2. It participates in cofactor biosynthesis; (R)-pantothenate biosynthesis; beta-alanine from L-aspartate: step 1/1. Functionally, catalyzes the pyruvoyl-dependent decarboxylation of aspartate to produce beta-alanine. This chain is Aspartate 1-decarboxylase, found in Hydrogenovibrio crunogenus (strain DSM 25203 / XCL-2) (Thiomicrospira crunogena).